The following is a 381-amino-acid chain: E3 ubiquitin-protein ligase At1g63170 (381 aa).

The disordered stretch occupies residues 1-23 (MSRETTTEATPLILTDGGGGRRS). The next 2 membrane-spanning stretches (helical) occupy residues 74–94 (VVVLDFVWNLAFVVVATAVLV) and 107–127 (VWIIGYGLQCMMHMVCVCVEY). The segment at 135-161 (RRDLSPRSSSSSSSSSSSMDEEEGLGL) is disordered. Residues 140 to 152 (PRSSSSSSSSSSS) are compositionally biased toward low complexity. Positions 170–194 (LELGQLENENNSFAKHLESANTMIS) form a coiled coil. The next 3 helical transmembrane spans lie at 189-209 (ANTMISFIWWVIGFYWVSSGG), 224-244 (IVFLGFDVFFVVFCVALACVI), and 245-265 (GIAVCCCLPCIIAVLYAVAEQ). The RING-type; atypical zinc-finger motif lies at 325 to 366 (CCICLSAYEDETELRELPCGHHFHCGCVDKWLYINATCPLCK).

The protein localises to the membrane. The enzyme catalyses S-ubiquitinyl-[E2 ubiquitin-conjugating enzyme]-L-cysteine + [acceptor protein]-L-lysine = [E2 ubiquitin-conjugating enzyme]-L-cysteine + N(6)-ubiquitinyl-[acceptor protein]-L-lysine.. Its pathway is protein modification; protein ubiquitination. Mediates E2-dependent protein ubiquitination. The sequence is that of E3 ubiquitin-protein ligase At1g63170 from Arabidopsis thaliana (Mouse-ear cress).